Consider the following 362-residue polypeptide: Ferredoxin--NADP reductase, leaf-type isozyme, chloroplastic (362 aa).

The segment at 1-20 (MATAVSAAVSLPSSKSTSFS) is disordered. Residues 1-62 (MATAVSAAVS…RAQVTTEAPA (62 aa)) constitute a chloroplast transit peptide. Low complexity predominate over residues 10–20 (SLPSSKSTSFS). The FAD-binding FR-type domain occupies 83–205 (KEPYVGRCLL…TGPVGKEMLM (123 aa)). FAD-binding positions include 141-144 (RLYS), 162-164 (CVK), Tyr168, 179-181 (VCS), and Thr220. NADP(+)-binding residues include Ser144 and Lys164. Residues Thr220, 252–253 (VP), 282–283 (SR), Lys292, 321–322 (GL), and Glu360 contribute to the NADP(+) site.

It belongs to the ferredoxin--NADP reductase type 1 family. Requires FAD as cofactor.

It localises to the plastid. The protein localises to the chloroplast stroma. It is found in the chloroplast thylakoid membrane. It catalyses the reaction 2 reduced [2Fe-2S]-[ferredoxin] + NADP(+) + H(+) = 2 oxidized [2Fe-2S]-[ferredoxin] + NADPH. It participates in energy metabolism; photosynthesis. May play a key role in regulating the relative amounts of cyclic and non-cyclic electron flow to meet the demands of the plant for ATP and reducing power. The protein is Ferredoxin--NADP reductase, leaf-type isozyme, chloroplastic (PETH) of Nicotiana tabacum (Common tobacco).